We begin with the raw amino-acid sequence, 246 residues long: Probable transcriptional regulatory protein Ent638_2432 (246 aa).

Belongs to the TACO1 family.

Its subcellular location is the cytoplasm. This chain is Probable transcriptional regulatory protein Ent638_2432, found in Enterobacter sp. (strain 638).